Reading from the N-terminus, the 276-residue chain is Homeobox-leucine zipper protein HOX11 (276 aa).

Residues Met-1–Leu-92 are disordered. The segment covering Leu-39–Gly-48 has biased composition (polar residues). The segment covering His-58–Asp-73 has biased composition (gly residues). The homeobox DNA-binding region spans Ser-87–Gln-146. The interval Lys-145–Pro-189 is leucine-zipper. The tract at residues Ala-214–Ala-244 is disordered.

It belongs to the HD-ZIP homeobox family. Class II subfamily. In terms of tissue distribution, expressed in stems, leaf sheaths and blades and panicles.

The protein resides in the nucleus. In terms of biological role, probable transcription factor. The chain is Homeobox-leucine zipper protein HOX11 (HOX11) from Oryza sativa subsp. indica (Rice).